The chain runs to 318 residues: ATP phosphoribosyltransferase regulatory subunit (318 aa).

It belongs to the class-II aminoacyl-tRNA synthetase family. HisZ subfamily. As to quaternary structure, heteromultimer composed of HisG and HisZ subunits.

The protein resides in the cytoplasm. It functions in the pathway amino-acid biosynthesis; L-histidine biosynthesis; L-histidine from 5-phospho-alpha-D-ribose 1-diphosphate: step 1/9. In terms of biological role, required for the first step of histidine biosynthesis. May allow the feedback regulation of ATP phosphoribosyltransferase activity by histidine. In Lactococcus lactis subsp. cremoris (strain SK11), this protein is ATP phosphoribosyltransferase regulatory subunit.